Reading from the N-terminus, the 129-residue chain is Small ribosomal subunit protein uS11 (129 aa).

The protein belongs to the universal ribosomal protein uS11 family. As to quaternary structure, part of the 30S ribosomal subunit. Interacts with proteins S7 and S18. Binds to IF-3.

Its function is as follows. Located on the platform of the 30S subunit, it bridges several disparate RNA helices of the 16S rRNA. Forms part of the Shine-Dalgarno cleft in the 70S ribosome. This is Small ribosomal subunit protein uS11 from Haemophilus ducreyi (strain 35000HP / ATCC 700724).